The sequence spans 164 residues: Interferon gamma (164 aa).

Positions 1–19 (MTCQTYNLFVLSVIMIYYG) are cleaved as a signal peptide. N-linked (GlcNAc...) asparagine glycans are attached at residues N42 and N61.

It belongs to the type II (or gamma) interferon family. As to quaternary structure, homodimer.

It is found in the secreted. Its function is as follows. Produced by lymphocytes activated by specific antigens or mitogens. IFN-gamma, in addition to having antiviral activity, has important immunoregulatory functions. It is a potent activator of macrophages, it has antiproliferative effects on transformed cells and it can potentiate the antiviral and antitumor effects of the type I interferons. This is Interferon gamma (IFNG) from Coturnix japonica (Japanese quail).